Consider the following 320-residue polypeptide: ATP-dependent 6-phosphofructokinase (320 aa).

G12 contributes to the ATP binding site. An ADP-binding site is contributed by 22-26; it reads RGVVR. ATP is bound by residues 73–74 and 103–106; these read RF and GDGS. D104 is a Mg(2+) binding site. Position 126–128 (126–128) interacts with substrate; it reads TID. Catalysis depends on D128, which acts as the Proton acceptor. Residue R155 coordinates ADP. Residues R163 and 170 to 172 each bind substrate; that span reads MGR. Residues 186-188, K212, and 214-216 each bind ADP; these read GCE and KKH. Substrate-binding positions include E223, R244, and 250–253; that span reads HIQR.

Belongs to the phosphofructokinase type A (PFKA) family. ATP-dependent PFK group I subfamily. Prokaryotic clade 'B1' sub-subfamily. Homotetramer. Mg(2+) is required as a cofactor.

The protein localises to the cytoplasm. It carries out the reaction beta-D-fructose 6-phosphate + ATP = beta-D-fructose 1,6-bisphosphate + ADP + H(+). It functions in the pathway carbohydrate degradation; glycolysis; D-glyceraldehyde 3-phosphate and glycerone phosphate from D-glucose: step 3/4. With respect to regulation, allosterically activated by ADP and other diphosphonucleosides, and allosterically inhibited by phosphoenolpyruvate. In terms of biological role, catalyzes the phosphorylation of D-fructose 6-phosphate to fructose 1,6-bisphosphate by ATP, the first committing step of glycolysis. The sequence is that of ATP-dependent 6-phosphofructokinase from Vibrio campbellii (strain ATCC BAA-1116).